The following is a 326-amino-acid chain: Fructose operon regulatory protein (326 aa).

The region spanning methionine 1–alanine 58 is the HTH lacI-type domain. The segment at residues leucine 3 to asparagine 22 is a DNA-binding region (H-T-H motif).

In terms of assembly, homodimer.

Interaction with F1P may induce a structural change in the DNA spacer region between the -35 and -10 elements, thereby facilitating RNAP binding to the promoter to trigger the transcriptional activation of the fru operon. Interaction with F1P does not release FruR from its binding sequence. Its function is as follows. Regulates the expression of the fruBKA (fru) operon, which encodes proteins involved in the import and metabolism of fructose. In the absence of fructose 1-phosphate (F1P), binds to the promoter region of fruB, interferes with the binding of the RNA polymerase (RNAP) to the promoter and represses the expression of the operon. In the presence of F1P, activates the transcription of the fru operon by facilitating the binding of RNAP to the promoter. Essential for the expression of the fru operon and thus for growth on fructose. This chain is Fructose operon regulatory protein, found in Vibrio cholerae serotype O1 (strain ATCC 39315 / El Tor Inaba N16961).